A 114-amino-acid chain; its full sequence is Iron-sulfur cluster insertion protein ErpA (114 aa).

Positions 42, 106, and 108 each coordinate iron-sulfur cluster.

The protein belongs to the HesB/IscA family. Homodimer. Requires iron-sulfur cluster as cofactor.

Required for insertion of 4Fe-4S clusters for at least IspG. This chain is Iron-sulfur cluster insertion protein ErpA, found in Edwardsiella ictaluri (strain 93-146).